We begin with the raw amino-acid sequence, 63 residues long: Disintegrin schistatin-like subunit B (63 aa).

Positions 1-63 (NSVNPCCDPQ…TPDCPRNRYN (63 aa)) constitute a Disintegrin domain. Cystine bridges form between Cys-6/Cys-29, Cys-20/Cys-26, Cys-25/Cys-50, and Cys-38/Cys-57. The short motif at 42-44 (RGD) is the Cell attachment site element.

The protein belongs to the disintegrin family. Dimeric disintegrin subfamily. Heterodimer with subunit A; disulfide-linked. Expressed by the venom gland.

The protein localises to the secreted. Its function is as follows. May bind to both alpha-IIb/beta-3 (ITGA2B/ITGB3) and alpha-V/beta-3 (ITGAV/ITGB3) integrins, and may inhibit platelet aggregation. This chain is Disintegrin schistatin-like subunit B, found in Echis carinatus (Saw-scaled viper).